Consider the following 433-residue polypeptide: Mitochondrial inner membrane protein OXA1L (433 aa).

The Mitochondrial intermembrane segment spans residues 1 to 108; that stretch reads MARNLVCGRW…QCATEPSFTE (108 aa). A helical transmembrane segment spans residues 109-129; the sequence is LGLGSYTPVGLIQNLLEYIHV. Over 130 to 134 the chain is Mitochondrial matrix; it reads DLGLP. The helical transmembrane segment at 135–155 threads the bilayer; it reads WWGAIATCTVLARCLVFPLIV. Over 156 to 207 the chain is Mitochondrial intermembrane; sequence KGQREAAKIHNHMPEMQKFSARIREAKLAGDQAEFYKATIEMTRYQKKHDIK. The chain crosses the membrane as a helical span at residues 208-228; that stretch reads LLRPLILPLTQAPVFISFFIA. Topologically, residues 229-255 are mitochondrial matrix; the sequence is LREMANLPVPSLQTGGLWWFQDLTVSD. A helical transmembrane segment spans residues 256–276; that stretch reads PIYVLPLVVTATMWCVLELGA. Over 277-293 the chain is Mitochondrial intermembrane; that stretch reads ETGVQSNDLQFMRNIIR. The chain crosses the membrane as a helical span at residues 294–314; it reads VMPLVVLPVTIHFPSAVFMYW. The Mitochondrial matrix portion of the chain corresponds to 315 to 433; that stretch reads LSSNVFSLCQ…AKKPWQDTLG (119 aa). Position 359 is a phosphoserine (Ser-359). Phosphothreonine occurs at positions 395 and 397. The segment at 397–433 is disordered; that stretch reads THNPLLQHDPSHPPKAPNSNNSSIKANAKKPWQDTLG. The segment covering 413-426 has biased composition (low complexity); the sequence is PNSNNSSIKANAKK.

The protein belongs to the OXA1/ALB3/YidC family. In terms of assembly, monomer; predominantly monomeric at low salt concentrations. Homooligomer; predominantly homooligomeric at high salt concentrations. Associates with the mitochondrial ribosome. Associates preferentially as a dimer with the large ribosomal subunit 39S of the mitochondrial ribosome. Interacts with OXA1L; promoting cotranslational quality control in mitochondria.

The protein localises to the mitochondrion inner membrane. In terms of biological role, mitochondrial membrane insertase that mediates the cotranslational insertion of integral membrane proteins into the mitochondrial inner membrane. Essential for the activity and assembly of cytochrome oxidase. Required for the correct biogenesis of ATP synthase and complex I in mitochondria. The polypeptide is Mitochondrial inner membrane protein OXA1L (Oxa1l) (Mus musculus (Mouse)).